We begin with the raw amino-acid sequence, 390 residues long: MPELPEVEAARRAIEENCLGKKIKRVIIADDNKVIHGISPSDFQTSILGKTIISARRKGKNLWLELDSPPFPSFQFGMAGAIYIKGVAVTKYKRSAVKDSEEWPSKYSKFFVELDDGLELSFTDKRRFAKVRLLANPTSVSPISELGPDALLEPMTVDEFAESLAKKKITIKPLLLDQGYISGIGNWIADEVLYQARIHPLQTASSLSKEQCEALHTSIKEVIEKAVEVDADSSQFPSYWIFHNREKKPGKAFVDGKKIDFITAGGRTTAYVPELQKLYGKDAEKAAKVRPAKRGVKPKEDDGDGEEDEQETEKEDESAKSKKGQKPRGGRGKKPASKTKTEESDDDGDDSEAEEEVVKPKGRGTKPAIKRKSEEKATSQAGKKPKGRKS.

The active-site Schiff-base intermediate with DNA is the Pro-2. Glu-3 serves as the catalytic Proton donor. Lys-60 acts as the Proton donor; for beta-elimination activity in catalysis. The DNA site is built by Tyr-107, Arg-126, Lys-167, and Asn-186. The tract at residues Ala-283–Ser-390 is disordered. Residues Asp-301 to Asp-316 show a composition bias toward acidic residues. Residues Ser-321–Ser-337 are compositionally biased toward basic residues. Residues Glu-343–Glu-355 are compositionally biased toward acidic residues. The segment covering Pro-360–Lys-370 has biased composition (basic residues).

The protein belongs to the FPG family. As to quaternary structure, monomer. Expressed in leaves (at protein levels).

The protein localises to the nucleus. It carries out the reaction Hydrolysis of DNA containing ring-opened 7-methylguanine residues, releasing 2,6-diamino-4-hydroxy-5-(N-methyl)formamidopyrimidine.. The enzyme catalyses 2'-deoxyribonucleotide-(2'-deoxyribose 5'-phosphate)-2'-deoxyribonucleotide-DNA = a 3'-end 2'-deoxyribonucleotide-(2,3-dehydro-2,3-deoxyribose 5'-phosphate)-DNA + a 5'-end 5'-phospho-2'-deoxyribonucleoside-DNA + H(+). In terms of biological role, involved in base excision repair of DNA damaged by oxidation or by mutagenic agents. Acts as a DNA glycosylase that recognizes and removes damaged bases. Can process efficiently 4,6-diamino-5-formamidopyrimidine (FapyA), 2,6-diamino-4- hydroxy-5-formamidopyrimidine (FapyG) and the further oxidation products of 8-oxoguanine (8-oxoG), such as guanidinohydantoin and spiroiminodihydantoin. Has marginal activity towards 8-oxoG. Has AP (apurinic/apyrimidinic) lyase activity. Cleaves the DNA backbone by beta-delta elimination to generate a single-strand break at the site of the removed base with both 3'- and 5'-phosphates. This is Formamidopyrimidine-DNA glycosylase (FPG1) from Arabidopsis thaliana (Mouse-ear cress).